Reading from the N-terminus, the 535-residue chain is Growth factor receptor-bound protein 7 (535 aa).

The tract at residues 1-90 (MELDLSPTHL…PILGGSSGAR (90 aa)) is disordered. Positions 21-37 (PATPPETPPPPDNPPPG) are enriched in pro residues. The region spanning 99 to 185 (RLCVVKVYSE…SRFIFRKNFA (87 aa)) is the Ras-associating domain. 2 positions are modified to phosphotyrosine; by FAK1: Tyr-187 and Tyr-341. Residues 228–341 (FPEIQGFLQL…WLAAFRLFKY (114 aa)) enclose the PH domain. Ser-364 is modified (phosphoserine). The region spanning 434-530 (WFHGRISREE…ILPCLLRHCC (97 aa)) is the SH2 domain.

This sequence belongs to the GRB7/10/14 family. As to quaternary structure, homodimer. Interacts (via SH2 domain) with EGFR, ERBB2, ERBB3 (when phosphorylated), ERBB4 (when phosphorylated), EPHB1, INSR, FGFR1, PDGFRA (tyrosine phosphorylated) and PDGFRB (tyrosine phosphorylated). Interacts with SHC1. Interacts with RND1. Interacts (when tyrosine phosphorylated) with FHL2 and HAX1. Interacts (via SH2 domain) with RET and PTK2/FAK1. Interacts (when not phosphorylated) with ELAVL1. In stressed cells, but not in normal cells, part of a complex that contains at least GRB7, PTK2/FAK1, STAU1, ELAVL1 and TIA1. Interacts (via SH2 domain) with KIT (phosphorylated). Interacts (via SH2 domain) with TEK/TIE2 (tyrosine phosphorylated). In terms of processing, phosphorylated on serine and threonine residues in response to activation of receptor kinases. Phosphorylated on tyrosine residues by TEK/TIE2. Phosphorylated on tyrosine residues by PTK2/FAK1, and possibly also other kinases. Phosphorylation is enhanced by activation of receptor kinases. Tyrosine phosphorylation is essential for activation of down-stream protein kinases. Phosphorylated on tyrosine residues in response to NTN1 signaling. Phosphorylation promotes stress granule disassembly during recovery after cellular stress.

It is found in the cytoplasm. It localises to the cell projection. Its subcellular location is the cell junction. The protein localises to the focal adhesion. The protein resides in the cell membrane. It is found in the cytoplasmic granule. Its function is as follows. Adapter protein that interacts with the cytoplasmic domain of numerous receptor kinases and modulates down-stream signaling. Promotes activation of down-stream protein kinases, including STAT3, AKT1, MAPK1 and/or MAPK3. Promotes activation of HRAS. Plays a role in signal transduction in response to EGF. Plays a role in the regulation of cell proliferation and cell migration. Plays a role in the assembly and stability of RNA stress granules. Binds to the 5'UTR of target mRNA molecules and represses translation of target mRNA species, when not phosphorylated. Phosphorylation impairs RNA binding and promotes stress granule disassembly during recovery after cellular stress. The protein is Growth factor receptor-bound protein 7 (Grb7) of Mus musculus (Mouse).